The following is a 657-amino-acid chain: Glycogen debranching enzyme (657 aa).

Catalysis depends on Asp-336, which acts as the Nucleophile. Glu-371 (proton donor) is an active-site residue. Over residues 458–467 (NEANGEENRD) the composition is skewed to basic and acidic residues. The tract at residues 458–479 (NEANGEENRDGTNNNYSNNHGK) is disordered.

Belongs to the glycosyl hydrolase 13 family.

The enzyme catalyses Hydrolysis of (1-&gt;6)-alpha-D-glucosidic linkages to branches with degrees of polymerization of three or four glucose residues in limit dextrin.. It functions in the pathway glycan degradation; glycogen degradation. In terms of biological role, removes maltotriose and maltotetraose chains that are attached by 1,6-alpha-linkage to the limit dextrin main chain, generating a debranched limit dextrin. The polypeptide is Glycogen debranching enzyme (Shigella sonnei (strain Ss046)).